Consider the following 698-residue polypeptide: Elongation factor G 1 (698 aa).

One can recognise a tr-type G domain in the interval 8-290 (ERYRNIGIVA…AVVDFLPAPI (283 aa)). GTP is bound by residues 17 to 24 (AHVDAGKT), 88 to 92 (DTPGH), and 142 to 145 (NKMD).

This sequence belongs to the TRAFAC class translation factor GTPase superfamily. Classic translation factor GTPase family. EF-G/EF-2 subfamily.

The protein localises to the cytoplasm. Functionally, catalyzes the GTP-dependent ribosomal translocation step during translation elongation. During this step, the ribosome changes from the pre-translocational (PRE) to the post-translocational (POST) state as the newly formed A-site-bound peptidyl-tRNA and P-site-bound deacylated tRNA move to the P and E sites, respectively. Catalyzes the coordinated movement of the two tRNA molecules, the mRNA and conformational changes in the ribosome. This is Elongation factor G 1 from Shewanella frigidimarina (strain NCIMB 400).